The chain runs to 92 residues: uncharacterized protein (92 aa).

This is an uncharacterized protein from Methanocaldococcus jannaschii (strain ATCC 43067 / DSM 2661 / JAL-1 / JCM 10045 / NBRC 100440) (Methanococcus jannaschii).